A 697-amino-acid polypeptide reads, in one-letter code: Elongation factor G (697 aa).

The tr-type G domain maps to 10–285 (EKTRNIGIVA…GVNDYLPSPL (276 aa)). GTP contacts are provided by residues 19–26 (AHIDAGKT), 83–87 (DTPGH), and 137–140 (NKMD).

Belongs to the TRAFAC class translation factor GTPase superfamily. Classic translation factor GTPase family. EF-G/EF-2 subfamily.

It localises to the cytoplasm. Catalyzes the GTP-dependent ribosomal translocation step during translation elongation. During this step, the ribosome changes from the pre-translocational (PRE) to the post-translocational (POST) state as the newly formed A-site-bound peptidyl-tRNA and P-site-bound deacylated tRNA move to the P and E sites, respectively. Catalyzes the coordinated movement of the two tRNA molecules, the mRNA and conformational changes in the ribosome. The chain is Elongation factor G from Ligilactobacillus salivarius (strain UCC118) (Lactobacillus salivarius).